The primary structure comprises 431 residues: Probable oxidoreductase OrdL (431 aa).

This Haemophilus influenzae (strain ATCC 51907 / DSM 11121 / KW20 / Rd) protein is Probable oxidoreductase OrdL (ordL).